The chain runs to 427 residues: Inward rectifier potassium channel 2 (427 aa).

The Cytoplasmic portion of the chain corresponds to Met-1–Trp-81. Position 76 is an S-nitrosocysteine (Cys-76). Residues Arg-82 to Ile-106 form a helical membrane-spanning segment. The Extracellular segment spans residues Ala-107–Ser-128. An intramembrane region (helical; Pore-forming) is located at residues Phe-129–Gln-140. An intramembrane region (pore-forming) is located at residues Thr-141 to Phe-147. Positions Thr-142–Phe-147 match the Selectivity filter motif. Over Arg-148 to Ile-156 the chain is Extracellular. Residues Ala-157–Ala-178 form a helical membrane-spanning segment. Residues Val-179–Ile-427 lie on the Cytoplasmic side of the membrane. Positions Ala-181–Leu-208 are polyphosphoinositide (PIP2)-binding. The segment at Ser-384–Ile-427 is disordered. The short motif at Ser-425 to Ile-427 is the PDZ-binding element.

Belongs to the inward rectifier-type potassium channel (TC 1.A.2.1) family. KCNJ2 subfamily. Homotetramer. Homomultimeric and heteromultimeric association with KCNJ4/Kir2.3. Can form heteromeric channels with Kir2.6/KCNJ18. Associates, via its PDZ-recognition domain, with a complex containing LIN7A, LIN7B, LIN7C, DLG1, CASK and APBA1. Post-translationally, S-nitrosylation increases the open probability and inward rectifying currents.

It is found in the cell membrane. Its subcellular location is the sarcolemma. It localises to the T-tubule. The catalysed reaction is K(+)(in) = K(+)(out). With respect to regulation, activated by phosphatidylinositol 4,5 biphosphate (PtdIns(4,5)P2). In terms of biological role, inward rectifier potassium channels are characterized by a greater tendency to allow potassium to flow into the cell rather than out of it. Their voltage dependence is regulated by the concentration of extracellular potassium; as external potassium is raised, the voltage range of the channel opening shifts to more positive voltages. The inward rectification is mainly due to the blockage of outward current by internal magnesium. Can be blocked by extracellular barium or cesium. Probably participates in establishing action potential waveform and excitability of neuronal and muscle tissues. The protein is Inward rectifier potassium channel 2 (KCNJ2) of Macaca mulatta (Rhesus macaque).